The sequence spans 597 residues: Serine/arginine repetitive matrix protein 3 (597 aa).

The span at 1-31 (MSSTVNNGAASMQSTPDAANGFPQPSSSSGT) shows a compositional bias: polar residues. The segment at 1 to 47 (MSSTVNNGAASMQSTPDAANGFPQPSSSSGTWPRAEEELRAAEPGLV) is disordered. The CWF21 domain occupies 55-98 (LDHERKRRVELKCMELQEMMEEQGYSEEEIRQKVGTFRQMLMEK). Residues 99–109 (EGVLTREDRPG) are compositionally biased toward basic and acidic residues. The disordered stretch occupies residues 99-597 (EGVLTREDRP…GPAPLPPPAA (499 aa)). Composition is skewed to basic residues over residues 149–158 (RGHRGYRTKH), 168–186 (PKKK…KKRR), 199–211 (LRKK…KHRR), and 219–243 (RRKR…KKRP). Low complexity-rich tracts occupy residues 257–278 (SGSS…PSRL) and 291–313 (SQRS…SPQR). Gly residues-rich tracts occupy residues 315–328 (GGSG…GGRP) and 374–383 (GRGGRAAGGA). The segment covering 384-412 (GRRRRRRRRRRRSRSSASAPRRRGRRRPR) has biased composition (basic residues). 3 stretches are compositionally biased toward low complexity: residues 417–433 (RGSS…SDSG), 466–476 (RPASTSPSPGA), and 488–507 (SSRS…SPSK). The segment covering 530–549 (LSRDKDGEGRARHSEAEATR) has biased composition (basic and acidic residues). Residues 550–565 (ARRRSRSYSPIRKRRR) show a composition bias toward basic residues.

This sequence belongs to the CWC21 family. In terms of tissue distribution, expressed in breast cancer cell lines.

Functionally, may play a role in regulating breast cancer cell invasiveness. May be involved in RYBP-mediated breast cancer progression. This chain is Serine/arginine repetitive matrix protein 3 (SRRM3), found in Homo sapiens (Human).